The sequence spans 450 residues: Cytochrome c1 (450 aa).

The signal sequence occupies residues 1-21; the sequence is MTLRNASLTAVAALTVALAGG. Positions 24–58 are enriched in low complexity; sequence AQDASTAPGTTAPAGSSYHTNEAAPAAADTAPAAE. The interval 24–210 is disordered; that stretch reads AQDASTAPGT…AAAQEAGDSH (187 aa). Acidic residues-rich tracts occupy residues 59-77, 85-108, and 118-194; these read AADE…EVTE, PAEE…EPAA, and APAE…EDEA. 3 residues coordinate heme c: C245, C248, and H249. Residues 284-305 are disordered; it reads PETEEDRPRVPTDHFPTVSGEG. Residue M373 participates in heme c binding. The chain crosses the membrane as a helical span at residues 421 to 435; sequence SVIFLIVLAALLYLT.

In terms of assembly, the main subunits of complex b-c1 are: cytochrome b, cytochrome c1 and the Rieske protein. Binds 1 heme c group covalently per subunit.

The protein localises to the cell membrane. Functionally, component of the ubiquinol-cytochrome c reductase complex (complex III or cytochrome b-c1 complex), which is a respiratory chain that generates an electrochemical potential coupled to ATP synthesis. c1 functions as an electron donor to cytochrome c. The sequence is that of Cytochrome c1 (petC) from Paracoccus denitrificans.